The primary structure comprises 169 residues: Cytochrome c oxidase subunit 4 isoform 1, mitochondrial (169 aa).

A mitochondrion-targeting transit peptide spans 1–22 (MLATRVFSLVGKRAISTSVCVR). The Mitochondrial matrix segment spans residues 23–98 (AHESVVKSED…SFAEMNRGSN (76 aa)). At Lys29 the chain carries N6-acetyllysine; alternate. At Lys29 the chain carries N6-succinyllysine; alternate. N6-acetyllysine is present on Lys53. Phosphoserine is present on residues Ser56 and Ser58. An N6-acetyllysine; alternate modification is found at Lys60. N6-succinyllysine; alternate is present on Lys60. Lys67 carries the post-translational modification N6-acetyllysine. The helical transmembrane segment at 99-124 (EWKTVVGGAMFFIGFTALVIMWQKHY) threads the bilayer. At 125–169 (VYGPLPQSFDKEWVAKQTKRMLDMKVNPIQGLASKWDYEKNEWKK) the chain is on the mitochondrial intermembrane side.

This sequence belongs to the cytochrome c oxidase IV family. Component of the cytochrome c oxidase (complex IV, CIV), a multisubunit enzyme composed of 14 subunits. The complex is composed of a catalytic core of 3 subunits MT-CO1, MT-CO2 and MT-CO3, encoded in the mitochondrial DNA, and 11 supernumerary subunits COX4I1 (or COX4I2), COX5A, COX5B, COX6A1 (or COX6A2), COX6B1 (or COX6B2), COX6C, COX7A2 (or COX7A1), COX7B, COX7C, COX8A and NDUFA4, which are encoded in the nuclear genome. The complex exists as a monomer or a dimer and forms supercomplexes (SCs) in the inner mitochondrial membrane with NADH-ubiquinone oxidoreductase (complex I, CI) and ubiquinol-cytochrome c oxidoreductase (cytochrome b-c1 complex, complex III, CIII), resulting in different assemblies (supercomplex SCI(1)III(2)IV(1) and megacomplex MCI(2)III(2)IV(2)). Interacts with AFG1L. Interacts with PHB2; the interaction decreases in absence of SPHK2. Interacts with ABCB7; this interaction allows the regulation of cellular iron homeostasis and cellular reactive oxygen species (ROS) levels in cardiomyocytes. Interacts with FLVCR2; this interaction occurs in the absence of heme and is disrupted upon heme binding. Interacts with IRGC. As to expression, ubiquitous.

The protein resides in the mitochondrion inner membrane. Its pathway is energy metabolism; oxidative phosphorylation. Component of the cytochrome c oxidase, the last enzyme in the mitochondrial electron transport chain which drives oxidative phosphorylation. The respiratory chain contains 3 multisubunit complexes succinate dehydrogenase (complex II, CII), ubiquinol-cytochrome c oxidoreductase (cytochrome b-c1 complex, complex III, CIII) and cytochrome c oxidase (complex IV, CIV), that cooperate to transfer electrons derived from NADH and succinate to molecular oxygen, creating an electrochemical gradient over the inner membrane that drives transmembrane transport and the ATP synthase. Cytochrome c oxidase is the component of the respiratory chain that catalyzes the reduction of oxygen to water. Electrons originating from reduced cytochrome c in the intermembrane space (IMS) are transferred via the dinuclear copper A center (CU(A)) of subunit 2 and heme A of subunit 1 to the active site in subunit 1, a binuclear center (BNC) formed by heme A3 and copper B (CU(B)). The BNC reduces molecular oxygen to 2 water molecules using 4 electrons from cytochrome c in the IMS and 4 protons from the mitochondrial matrix. In Homo sapiens (Human), this protein is Cytochrome c oxidase subunit 4 isoform 1, mitochondrial.